The following is a 379-amino-acid chain: Alcohol dehydrogenase 2 (379 aa).

Zn(2+) is bound by residues Cys-47, Thr-49, His-69, Cys-99, Cys-102, Cys-105, Cys-113, and Cys-177. Thr-49 and His-69 together coordinate an alcohol. Thr-49 is a binding site for NAD(+). Residues 202 to 207 (GLGAVG), Asp-226, Lys-231, Thr-272, Val-295, 295 to 297 (VGV), Phe-322, and Arg-372 each bind NAD(+).

The protein belongs to the zinc-containing alcohol dehydrogenase family. As to quaternary structure, homodimer. Requires Zn(2+) as cofactor.

The protein localises to the cytoplasm. It catalyses the reaction a primary alcohol + NAD(+) = an aldehyde + NADH + H(+). The catalysed reaction is a secondary alcohol + NAD(+) = a ketone + NADH + H(+). The chain is Alcohol dehydrogenase 2 (ADH2) from Oryza sativa subsp. indica (Rice).